The following is a 264-amino-acid chain: Thymidylate synthase (264 aa).

Residue arginine 21 participates in dUMP binding. (6R)-5,10-methylene-5,6,7,8-tetrahydrofolate is bound at residue histidine 51. Residue 126–127 coordinates dUMP; that stretch reads RR. The Nucleophile role is filled by cysteine 146. DUMP is bound by residues 166 to 169, asparagine 177, and 207 to 209; these read RSAD and HLY. Aspartate 169 provides a ligand contact to (6R)-5,10-methylene-5,6,7,8-tetrahydrofolate. Alanine 263 lines the (6R)-5,10-methylene-5,6,7,8-tetrahydrofolate pocket.

This sequence belongs to the thymidylate synthase family. Bacterial-type ThyA subfamily. As to quaternary structure, homodimer.

It is found in the cytoplasm. The catalysed reaction is dUMP + (6R)-5,10-methylene-5,6,7,8-tetrahydrofolate = 7,8-dihydrofolate + dTMP. It participates in pyrimidine metabolism; dTTP biosynthesis. Functionally, catalyzes the reductive methylation of 2'-deoxyuridine-5'-monophosphate (dUMP) to 2'-deoxythymidine-5'-monophosphate (dTMP) while utilizing 5,10-methylenetetrahydrofolate (mTHF) as the methyl donor and reductant in the reaction, yielding dihydrofolate (DHF) as a by-product. This enzymatic reaction provides an intracellular de novo source of dTMP, an essential precursor for DNA biosynthesis. This chain is Thymidylate synthase, found in Nitrosomonas eutropha (strain DSM 101675 / C91 / Nm57).